We begin with the raw amino-acid sequence, 399 residues long: Bombesin receptor subtype-3 (399 aa).

Residues 1–31 (MSQRQPQSPNQTLISTTNDTESSSSVVPNDS) are compositionally biased toward polar residues. The tract at residues 1–38 (MSQRQPQSPNQTLISTTNDTESSSSVVPNDSTNKRRTG) is disordered. The Extracellular segment spans residues 1 to 41 (MSQRQPQSPNQTLISTTNDTESSSSVVPNDSTNKRRTGDNS). 3 N-linked (GlcNAc...) asparagine glycosylation sites follow: Asn-10, Asn-18, and Asn-29. Residues 42 to 63 (PGIEALCAIYITYAVIISVGIL) traverse the membrane as a helical segment. At 64-82 (GNAILIKVFFKTKSMQTVP) the chain is on the cytoplasmic side. The chain crosses the membrane as a helical span at residues 83–103 (NIFITSLAFGDLLLLLTCVPV). The Extracellular segment spans residues 104 to 121 (DVTHYLAEGWLFGRIGCK). Cys-120 and Cys-203 are joined by a disulfide. A helical transmembrane segment spans residues 122-143 (VLSFIRLTSVGVSVFTLTILSA). At 144-163 (DRYKAVVKPLERQPPNAILK) the chain is on the cytoplasmic side. The helical transmembrane segment at 164–184 (TCAKAGCIWIMSMIIALPEAI) threads the bilayer. The Extracellular portion of the chain corresponds to 185–220 (FSNVYTFQDPDKNVTFKACASYPVSERLLQEIHSLL). A helical transmembrane segment spans residues 221 to 241 (CFLVFYIIPLSIISVYYSLIA). The Cytoplasmic segment spans residues 242–272 (RTLYKSTLNIPTEEQRHARKQIESRKRIAKT). Residues 273–293 (VLVLVALFALCWLPNHLLYLY) form a helical membrane-spanning segment. The Extracellular segment spans residues 294–313 (RSFTSQTYMDSSTVHLFVTI). Residues 314–333 (ISRILAFSNSCVNPFALYWL) traverse the membrane as a helical segment. The Cytoplasmic segment spans residues 334–399 (SNTFQQHFKA…CSVKKEDDRV (66 aa)).

It belongs to the G-protein coupled receptor 1 family. Interacts with C6orf89.

The protein localises to the cell membrane. Role in sperm cell division, maturation, or function. This receptor mediates its action by association with G proteins that activate a phosphatidylinositol-calcium second messenger system. The sequence is that of Bombesin receptor subtype-3 (BRS3) from Ovis aries (Sheep).